Here is a 266-residue protein sequence, read N- to C-terminus: 14-3-3 protein homolog (266 aa).

The interval 154-177 (KQAADQAQESYQKATETAEGHSPA) is disordered. The segment covering 158–168 (DQAQESYQKAT) has biased composition (polar residues).

The protein belongs to the 14-3-3 family.

This Neospora caninum (Coccidian parasite) protein is 14-3-3 protein homolog.